Reading from the N-terminus, the 106-residue chain is Urease subunit beta (106 aa).

The protein belongs to the urease beta subunit family. Heterotrimer of UreA (gamma), UreB (beta) and UreC (alpha) subunits. Three heterotrimers associate to form the active enzyme.

It is found in the cytoplasm. It catalyses the reaction urea + 2 H2O + H(+) = hydrogencarbonate + 2 NH4(+). It functions in the pathway nitrogen metabolism; urea degradation; CO(2) and NH(3) from urea (urease route): step 1/1. This is Urease subunit beta from Prochlorococcus marinus (strain MIT 9215).